The sequence spans 434 residues: Alpha-enolase (434 aa).

Ser40 is a binding site for Mg(2+). Residues His158 and Glu167 each contribute to the substrate site. Residue Glu210 is the Proton donor of the active site. The Mg(2+) site is built by Asp245, Glu293, and Asp318. Residues Glu293, Asp318, 370 to 373, and Lys394 each bind substrate; that span reads SHRS.

The protein belongs to the enolase family. Homodimer. Mg(2+) is required as a cofactor.

The protein resides in the cytoplasm. The enzyme catalyses (2R)-2-phosphoglycerate = phosphoenolpyruvate + H2O. It participates in carbohydrate degradation; glycolysis; pyruvate from D-glyceraldehyde 3-phosphate: step 4/5. The polypeptide is Alpha-enolase (Trachemys scripta elegans (Red-eared slider turtle)).